We begin with the raw amino-acid sequence, 230 residues long: Homeobox protein Hox-B5 (230 aa).

The tract at residues 1-135 is disordered; it reads GGGGGNVSGS…GAAGTDGQSP (135 aa). Over residues 49–65 the composition is skewed to polar residues; the sequence is FPGQESSRFRANQNCPL. Residues 87–103 show a composition bias toward low complexity; that stretch reads ATSSAHFTETEETSASS. The Antp-type hexapeptide motif lies at 137–142; that stretch reads IFPWMR. The segment at residues 155-214 is a DNA-binding region (homeobox); it reads GKRARTAYTRYQTLELEKEFHFNRYLTRRRRIEIAHTLCLSERQIKIWFQNRRMKWKKDN.

This sequence belongs to the Antp homeobox family.

It is found in the nucleus. Functionally, sequence-specific transcription factor which is part of a developmental regulatory system that provides cells with specific positional identities on the anterior-posterior axis. This chain is Homeobox protein Hox-B5 (hoxb5), found in Xenopus laevis (African clawed frog).